The primary structure comprises 311 residues: Retron Ec78 reverse transcriptase (311 aa).

Residues 15 to 241 (DSGISAFLVT…HNRHVTGVTI (227 aa)) form the Reverse transcriptase domain. 3 residues coordinate Mg(2+): Asp-96, Asp-187, and Asp-188.

It belongs to the bacterial reverse transcriptase family.

The catalysed reaction is DNA(n) + a 2'-deoxyribonucleoside 5'-triphosphate = DNA(n+1) + diphosphate. In terms of biological role, reverse transcriptase (RT) component of antiviral defense system retron Ec78, composed of a non-coding RNA (ncRNA), this reverse transcriptase (RT), a probable ATPase and a putative HNH endonuclease. Expression of retron Ec78 confers protection against bacteriophage T5. At multiplicity of infection (MOI) of 0.02 cultures slow growth when infected with T5 but do not collapse, at MOI 2 cultures enter growth stasis. Responsible for synthesis of msDNA-Ec78 (a linear ssDNA with a 5'-terminal phosphate residue). Unlike most known msDNAs the mature product does not have an RNA component. The retron transcript serves as primer and template for the reaction, and codes for the RT. Not mutagenic when cloned in E.coli. It is thought to be synthesized as a branched RNA with a 2',5'-phosphodiester linkage to ssDNA; the linkage is cleaved endonucleolytically by ExoVII (xseA-xseB) leaving the observed mature 5'-ssDNA terminus. Overexpression of the ncRNA and RT, which leads to increased levels of msDNA, is not mutagenic in vivo. As the stem in the msDNA does not have a mismatch it probably does not bind or sequester MutS and/or MutL. The polypeptide is Retron Ec78 reverse transcriptase (Escherichia coli).